The sequence spans 500 residues: Lysine--tRNA ligase (500 aa).

Mg(2+) contacts are provided by Glu-410 and Glu-417.

It belongs to the class-II aminoacyl-tRNA synthetase family. As to quaternary structure, homodimer. The cofactor is Mg(2+).

Its subcellular location is the cytoplasm. It carries out the reaction tRNA(Lys) + L-lysine + ATP = L-lysyl-tRNA(Lys) + AMP + diphosphate. This is Lysine--tRNA ligase from Pseudomonas putida (strain ATCC 700007 / DSM 6899 / JCM 31910 / BCRC 17059 / LMG 24140 / F1).